The primary structure comprises 692 residues: ABC1 family protein C21C3.03, mitochondrial (692 aa).

The N-terminal 91 residues, 1–91, are a transit peptide targeting the mitochondrion; sequence MISFSHWNSH…RKFTTRQKSE (91 aa). Helical transmembrane passes span 96–116 and 161–181; these read WRILRITFLVLPFTVGGLWIL and LFIIFSPIIITLPFIALISFL.

It belongs to the protein kinase superfamily. ADCK protein kinase family.

Its subcellular location is the mitochondrion membrane. The polypeptide is ABC1 family protein C21C3.03, mitochondrial (Schizosaccharomyces pombe (strain 972 / ATCC 24843) (Fission yeast)).